The primary structure comprises 540 residues: Early growth response protein 1 (540 aa).

2 disordered regions span residues 1 to 105 (MAAA…AESF) and 162 to 240 (VSMT…PAYP). The span at 64-75 (SSGGGGGGGGGS) shows a compositional bias: gly residues. Over residues 167-190 (PPATSSSASSPAASSSASQSPPLS) the composition is skewed to low complexity. The segment covering 192–201 (AVQSNDSSPI) has biased composition (polar residues). Lysine 304 is covalently cross-linked (Glycyl lysine isopeptide (Lys-Gly) (interchain with G-Cter in SUMO2)). The interval 317–337 (PSRMRKYPNRPSKTPPHERPY) is disordered. Residues 337-361 (YACPVESCDRRFSRSDELTRHIRIH) form a C2H2-type 1 zinc finger. Residues 366 to 388 (PQCRISMRNFSRSDHLTTHIRTH) form a C2H2-type 2; degenerate zinc finger. A C2H2-type 3 zinc finger spans residues 394–416 (FACDICGRKFARSDERKRHTKIH). The segment at 407-482 (DERKRHTKIH…SPGSSTYPSP (76 aa)) is disordered. Basic residues predominate over residues 411-421 (RHTKIHLRQKD). Over residues 427–482 (SAASAATSSLPSYPSPVATSYPSPATTSYPSPATTSYPSPVPTSYSSPGSSTYPSP) the composition is skewed to low complexity.

This sequence belongs to the EGR C2H2-type zinc-finger protein family. In terms of assembly, interacts with SNAI1 and SP1 upon 12-O-tetradecanoylphorbol-13-acetate (TPA) induction.

It is found in the nucleus. The protein resides in the cytoplasm. Transcriptional regulator. Recognizes and binds to the DNA sequence 5'-GCG(T/G)GGGCG-3'(EGR-site) in the promoter region of target genes. Binds double-stranded target DNA, irrespective of the cytosine methylation status. Regulates the transcription of numerous target genes, and thereby plays an important role in regulating the response to growth factors, DNA damage, and ischemia. Plays a role in the regulation of cell survival, proliferation and cell death. Activates expression of p53/TP53 and TGFB1, and thereby helps prevent tumor formation. Required for normal progress through mitosis and normal proliferation of hepatocytes after partial hepatectomy. Mediates responses to ischemia and hypoxia; regulates the expression of proteins such as IL1B and CXCL2 that are involved in inflammatory processes and development of tissue damage after ischemia. Regulates biosynthesis of luteinizing hormone (LHB) in the pituitary. Regulates the amplitude of the expression rhythms of clock genes: BMAL1, PER2 and NR1D1 in the liver via the activation of PER1 (clock repressor) transcription. Regulates the rhythmic expression of core-clock gene BMAL1 in the suprachiasmatic nucleus (SCN). The protein is Early growth response protein 1 (EGR1) of Bos taurus (Bovine).